The chain runs to 279 residues: Non-structural maintenance of chromosomes element 3 homolog (279 aa).

The tract at residues 1-52 (MLQKPRGRGRPSTQADPERDWGGAGEEGPSTSRAAGGSSQGSRASLSAPTVG) is disordered. Residues 30 to 48 (STSRAAGGSSQGSRASLSA) show a composition bias toward low complexity. Phosphoserine is present on serine 38. Positions 52–279 (GPRTQKQLEL…ATASAPATSS (228 aa)) are interaction with NSMCE1. Positions 59–259 (LELKVAELVQ…KDWPTQYCEA (201 aa)) constitute an MAGE domain.

Component of the SMC5-SMC6 complex which consists at least of SMC5, SMC6, NSMCE2, NSMCE1, NSMCE4A or EID3 and NSMCE3. NSMCE1, NSMCE4A or EID3 and NSMCE3 probably form a subcomplex that bridges the head domains of the SMC5:SMC6 heterodimer. Interacts with PJA1. Interacts with E2F1 (via C-terminus). Interacts with NGFR (via C-terminus). Interacts with NSMCE1. Interacts with NSMCE4. Interacts with SMC6. Interacts with EID3. As to expression, ubiquitous.

It is found in the cytoplasm. The protein resides in the nucleus. The protein localises to the chromosome. Its subcellular location is the telomere. Its function is as follows. Component of the SMC5-SMC6 complex, a complex involved in repair of DNA double-strand breaks by homologous recombination. The complex may promote sister chromatid homologous recombination by recruiting the SMC1-SMC3 cohesin complex to double-strand breaks. The complex is required for telomere maintenance via recombination in ALT (alternative lengthening of telomeres) cell lines and mediates sumoylation of shelterin complex (telosome) components which is proposed to lead to shelterin complex disassembly in ALT-associated PML bodies (APBs). In vitro enhances ubiquitin ligase activity of NSMCE1. Proposed to act through recruitment and/or stabilization of the Ubl-conjugating enzyme (E2) at the E3:substrate complex. May be a growth suppressor that facilitates the entry of the cell into cell cycle arrest. The protein is Non-structural maintenance of chromosomes element 3 homolog (Nsmce3) of Mus musculus (Mouse).